Here is a 208-residue protein sequence, read N- to C-terminus: N-(5'-phosphoribosyl)anthranilate isomerase (208 aa).

It belongs to the TrpF family.

It catalyses the reaction N-(5-phospho-beta-D-ribosyl)anthranilate = 1-(2-carboxyphenylamino)-1-deoxy-D-ribulose 5-phosphate. It functions in the pathway amino-acid biosynthesis; L-tryptophan biosynthesis; L-tryptophan from chorismate: step 3/5. This Nitrosospira multiformis (strain ATCC 25196 / NCIMB 11849 / C 71) protein is N-(5'-phosphoribosyl)anthranilate isomerase.